The following is an 853-amino-acid chain: Wolframin (853 aa).

Positions 139 to 179 (KQLERKMRRIYNLQRKRRRRDDDRSSSSSEGEQEPECEPLE) are disordered. Residues 144–157 (KMRRIYNLQRKRRR) show a composition bias toward basic residues. Acidic residues predominate over residues 169 to 179 (GEQEPECEPLE). The next 10 helical transmembrane spans lie at 238 to 258 (MIFHPLIFFTLFYHRLLNLIV), 259 to 279 (SIPNVIPLSVRCSVLVAISWW), 285 to 305 (LPLVSYYLSLGIMIWATCKML), 347 to 367 (LYFFCAFICNLIVYPLVTDAW), 373 to 393 (LTIISGALTFITMCVSMYASS), 446 to 466 (FCLNCRTALYLFIPVLLIMMA), 473 to 493 (GVYTFLIPHCVTLSWLQVCIA), 513 to 533 (IVLFLPLFGIVALLVPVFVAI), 545 to 565 (WGSTALACGLVVVLSCILALN), and 572 to 592 (ITMLQLITAITTACLLVLPYM). Asparagine 694 and asparagine 769 each carry an N-linked (GlcNAc...) asparagine glycan.

In terms of tissue distribution, detected in adult brain.

Its subcellular location is the membrane. It localises to the endoplasmic reticulum. The protein localises to the mitochondrion. In terms of biological role, participates in the regulation of cellular Ca(2+) homeostasis, at least partly, by modulating the filling state of the endoplasmic reticulum Ca(2+) store. In neurons and glial cells, has a role in maintaining neuronal function and integrity during aging. The sequence is that of Wolframin from Drosophila melanogaster (Fruit fly).